A 61-amino-acid chain; its full sequence is Small ribosomal subunit protein uS14 (61 aa).

Zn(2+) contacts are provided by Cys-24, Cys-27, Cys-40, and Cys-43.

The protein belongs to the universal ribosomal protein uS14 family. Zinc-binding uS14 subfamily. In terms of assembly, part of the 30S ribosomal subunit. Contacts proteins S3 and S10. Zn(2+) serves as cofactor.

Functionally, binds 16S rRNA, required for the assembly of 30S particles and may also be responsible for determining the conformation of the 16S rRNA at the A site. The sequence is that of Small ribosomal subunit protein uS14 from Acidithiobacillus ferrooxidans (strain ATCC 23270 / DSM 14882 / CIP 104768 / NCIMB 8455) (Ferrobacillus ferrooxidans (strain ATCC 23270)).